We begin with the raw amino-acid sequence, 91 residues long: Acyl-CoA-binding domain-containing protein 2 (91 aa).

The 86-residue stretch at 3-88 folds into the ACB domain; sequence LQEEFEEFAE…VKQLLEEASA (86 aa). An acyl-CoA contacts are provided by residues K15, 30–34, K52, K56, and Y75; that span reads YGLYK.

Belongs to the ACBP family. As to expression, highly expressed in leaves. Expressed at low levels in roots and seeds.

Its subcellular location is the cytoplasm. The protein resides in the cytosol. Its function is as follows. Binds medium- and long-chain acyl-CoA esters with high affinity. Can interact in vitro with linolenoyl-CoA. Binds palmitoyl-CoA and linoleoyl-CoA in vitro. Binds phosphatidic acid (PA) and phosphatidylcholine (PC) in vitro. May play a role in the biosynthesis of phospholipids. The chain is Acyl-CoA-binding domain-containing protein 2 from Oryza sativa subsp. japonica (Rice).